Reading from the N-terminus, the 706-residue chain is Probable E3 ubiquitin ligase complex SCF subunit sconB (706 aa).

Over residues 1-12 (MQSDDRSVREGS) the composition is skewed to basic and acidic residues. Disordered regions lie at residues 1–43 (MQSD…LLQQ) and 56–76 (TAEEIDTETDSNHRRPHSFGA). Over residues 34 to 43 (QQQQQQLLQQ) the composition is skewed to low complexity. The F-box domain occupies 203 to 249 (IDFLTALPPEISFKILCYLDTTSLCKAAQVSSRWRALADDDVVWHRM). 7 WD repeats span residues 377-414 (GHTNGVMCLQFEDNILATGSYDATIKIWDTETGEELRT), 417-456 (GHQSGIRCLQFDDTKLISGSMDRSLKVWNWRTGECISTYT), 458-494 (HRGGVIGLHFDATILASASVDKTVKIWNFEDKSTFLL), 496-537 (GHTD…RTFH), 589-632 (ATET…CLRT), 635-672 (GHLEGVWALGADTLRIVSGAEDRMVKIWDPRTGKCERT), and 675-706 (GHSGPVTCIGLGDSRFATGSEDCEVRMYSFRN).

It belongs to the WD repeat MET30/SCONB/SCON-2 family. Component of the SCF(sconB) E3 ubiquitin ligase complex.

The protein operates within protein modification; protein ubiquitination. Functionally, component of the SCF(sconB) E3 ubiquitin ligase complex involved in the regulation of sulfur metabolite repression, probably by mediating the inactivation or degradation of the metR transcription factor. This is Probable E3 ubiquitin ligase complex SCF subunit sconB (sconB) from Aspergillus flavus (strain ATCC 200026 / FGSC A1120 / IAM 13836 / NRRL 3357 / JCM 12722 / SRRC 167).